Consider the following 522-residue polypeptide: MYTPIPANTPAPTAPTSSMTSNSSSASNANTTSSSGINPRNRASGTPSNERARPASGISSFLNTFGIRQNSQTASSSAAPDQRLFGTTPSNSHMSVAMESIDTAPQQQEPRLHHPIQMPLSAQFHVHRNYQLPISISLTAPTTTDHQQSSAHNFEGNNVGNVQESLNQRQPNGTNNTTTSIISMAPAATTRNIVGGADGSTIVNNSQEMYKNLRHLIYAANQPNGTEILHLDLPATSAEESNNMFNVDEVTLKQRKDKHGLFSIRLTPFIDSSSTTNQGLFFEPIIRKAGPGSQLVIGRYTERVRDAISKIPEQYHPVVFKSKVVSRTHGCFKVDSQGNWYIKDVKSSSGTFLNHQRLSPASSLSKDTPLRDGDILQLGMDFRGGTEEIYRCVRMRIELNRSWKLKANSFNKEALQRLQNLQKLTTGIEEEDCSICLCKIKPCQAIFISPCAHSWHFRCVRRLVMLSYPQFVCPNCRSSCDLEASFESSDEEDESDVESEGDQLVDQLSVLMETSKDVDSHP.

Disordered regions lie at residues 1 to 56 and 69 to 92; these read MYTP…RPAS and QNSQ…PSNS. Residues 14 to 35 are compositionally biased toward low complexity; it reads APTSSMTSNSSSASNANTTSSS. Residues 36–49 show a composition bias toward polar residues; it reads GINPRNRASGTPSN. Ser206 carries the post-translational modification Phosphoserine. Glycyl lysine isopeptide (Lys-Gly) (interchain with G-Cter in ubiquitin) cross-links involve residues Lys211, Lys256, Lys258, Lys288, Lys310, Lys333, Lys343, Lys346, Lys366, Lys406, Lys412, and Lys423. The FHA domain maps to 295–358; that stretch reads LVIGRYTERV…SGTFLNHQRL (64 aa). Residues 433 to 477 form an RING-type zinc finger; it reads CSICLCKIKPCQAIFISPCAHSWHFRCVRRLVMLSYPQFVCPNCR.

The protein belongs to the DMA1 family. UBC4-dependent autoubiquitination occurs at Lys-211, Lys-258, Lys-288, Lys-310, Lys-333, Lys-343, Lys-346, Lys-366, Lys-406, Lys-412 and Lys-423. UBC4-dependent autoubiquitination is responsible for DMA2 turnover. UBC13/MMS2-dependent autoubiquitination occurs at Lys-258, Lys-310, Lys-346 and Lys-366. Lys-211, Lys-256, Lys-288, Lys-310, Lys-343, Lys-258, Lys-366 and Lys-412 are also ubiquitinated in trans by DMA1 E3 ligase in association with UBC4.

Its subcellular location is the cytoplasm. It carries out the reaction S-ubiquitinyl-[E2 ubiquitin-conjugating enzyme]-L-cysteine + [acceptor protein]-L-lysine = [E2 ubiquitin-conjugating enzyme]-L-cysteine + N(6)-ubiquitinyl-[acceptor protein]-L-lysine.. Functionally, E3 ubiquitin-protein ligase which functions in cell cycle retarding in conjunction with the UBC4 and UBC13/MMS2 complex, 2 E2 ubiquitin conjugating enzymes. Involved in nutritional control of the cell cycle. Required for proper spindle positioning, likely regulating septin ring deposition at the bud neck. In Saccharomyces cerevisiae (strain ATCC 204508 / S288c) (Baker's yeast), this protein is E3 ubiquitin-protein ligase DMA2 (DMA2).